Reading from the N-terminus, the 687-residue chain is Probable WRKY transcription factor 2 (687 aa).

Positions 197–276 (YGNYNNRSSS…AGGAPAEDGY (80 aa)) are disordered. 2 stretches are compositionally biased toward polar residues: residues 199–208 (NYNNRSSSHQ) and 219–249 (NIESSNLYGIETDNQNGQNKTSDVTTNTSLE). A DNA-binding region (WRKY 1) is located at residues 267-331 (AGGAPAEDGY…YKGAHNHLKP (65 aa)). Cysteine 298, cysteine 303, histidine 326, and histidine 328 together coordinate Zn(2+). Disordered stretches follow at residues 324–384 (GAHN…STRF) and 416–453 (FSNDEDEDDRGTHGSVSLGYDGGGGGGGGEGDESESKR). The segment covering 354–379 (RDSAATWVSCNNTQQQGGSNENNVEE) has biased composition (polar residues). Positions 435–444 (YDGGGGGGGG) are enriched in gly residues. Residues 481–546 (SDVDILDDGY…YEGKHNHDVP (66 aa)) constitute a DNA-binding region (WRKY 2). 4 residues coordinate Zn(2+): cysteine 512, cysteine 517, histidine 541, and histidine 543. The disordered stretch occupies residues 537–599 (YEGKHNHDVP…QVTTNNQSPF (63 aa)). Gly residues predominate over residues 553-565 (HGGGGDSGNGNSG). Positions 578–589 (HHSEPPRGRFDR) are enriched in basic and acidic residues. The span at 590–599 (QVTTNNQSPF) shows a compositional bias: polar residues.

Belongs to the WRKY group I family. In terms of tissue distribution, low expression in senescent leaves. Expressed in both the unfertilized egg cell and the pollen tube.

Its subcellular location is the nucleus. Functionally, transcription factor. Regulates WOX8 and WOX9 expression and basal cell division patterns during early embryogenesis. Interacts specifically with the W box (5'-(T)TGAC[CT]-3'), a frequently occurring elicitor-responsive cis-acting element. Required to repolarize the zygote from a transient symmetric state. The polypeptide is Probable WRKY transcription factor 2 (Arabidopsis thaliana (Mouse-ear cress)).